A 114-amino-acid chain; its full sequence is Large ribosomal subunit protein bL20 (114 aa).

Belongs to the bacterial ribosomal protein bL20 family.

Binds directly to 23S ribosomal RNA and is necessary for the in vitro assembly process of the 50S ribosomal subunit. It is not involved in the protein synthesizing functions of that subunit. The sequence is that of Large ribosomal subunit protein bL20 from Anaeromyxobacter sp. (strain Fw109-5).